We begin with the raw amino-acid sequence, 566 residues long: Proline--tRNA ligase 1 (566 aa).

The protein belongs to the class-II aminoacyl-tRNA synthetase family. ProS type 1 subfamily. Homodimer.

The protein resides in the cytoplasm. The catalysed reaction is tRNA(Pro) + L-proline + ATP = L-prolyl-tRNA(Pro) + AMP + diphosphate. In terms of biological role, catalyzes the attachment of proline to tRNA(Pro) in a two-step reaction: proline is first activated by ATP to form Pro-AMP and then transferred to the acceptor end of tRNA(Pro). As ProRS can inadvertently accommodate and process non-cognate amino acids such as alanine and cysteine, to avoid such errors it has two additional distinct editing activities against alanine. One activity is designated as 'pretransfer' editing and involves the tRNA(Pro)-independent hydrolysis of activated Ala-AMP. The other activity is designated 'posttransfer' editing and involves deacylation of mischarged Ala-tRNA(Pro). The misacylated Cys-tRNA(Pro) is not edited by ProRS. This is Proline--tRNA ligase 1 from Bacillus cereus (strain ZK / E33L).